Here is a 306-residue protein sequence, read N- to C-terminus: Glutamyl-Q tRNA(Asp) synthetase (306 aa).

L-glutamate contacts are provided by residues Arg4–Ser8 and Glu40. The 'HIGH' region motif lies at Pro7–Asn17. Residues Cys92, Cys94, Tyr113, and Cys117 each contribute to the Zn(2+) site. Positions 180 and 198 each coordinate L-glutamate. Positions Arg236–Arg240 match the 'KMSKS' region motif. Residue Lys239 participates in ATP binding.

Belongs to the class-I aminoacyl-tRNA synthetase family. GluQ subfamily. The cofactor is Zn(2+).

Functionally, catalyzes the tRNA-independent activation of glutamate in presence of ATP and the subsequent transfer of glutamate onto a tRNA(Asp). Glutamate is transferred on the 2-amino-5-(4,5-dihydroxy-2-cyclopenten-1-yl) moiety of the queuosine in the wobble position of the QUC anticodon. This chain is Glutamyl-Q tRNA(Asp) synthetase, found in Corynebacterium efficiens (strain DSM 44549 / YS-314 / AJ 12310 / JCM 11189 / NBRC 100395).